We begin with the raw amino-acid sequence, 421 residues long: Isocitrate dehydrogenase [NADP], mitochondrial (421 aa).

A mitochondrion-targeting transit peptide spans 1 to 8 (ARAAARHY). N6-acetyllysine is present on residues Lys14, Lys17, Lys36, and Lys38. An N6-acetyllysine; alternate mark is found at Lys49 and Lys75. 2 positions are modified to N6-succinyllysine; alternate: Lys49 and Lys75. NADP(+)-binding positions include 84–86 (TIT) and Arg91. Residue Thr86 coordinates D-threo-isocitrate. D-threo-isocitrate contacts are provided by residues 103-109 (SPNGTIR) and Arg118. An N6-acetyllysine modification is found at Lys124. Position 135 is an N6-acetyllysine; alternate (Lys135). At Lys135 the chain carries N6-succinyllysine; alternate. Arg141 is a binding site for D-threo-isocitrate. N6-acetyllysine; alternate is present on residues Lys149 and Lys162. N6-succinyllysine; alternate is present on residues Lys149 and Lys162. N6-acetyllysine is present on Lys168. Lys225 is modified (N6-acetyllysine; alternate). Residue Lys225 is modified to N6-succinyllysine; alternate. N6-acetyllysine is present on residues Lys232, Lys241, Lys244, and Lys249. Lys251 carries the post-translational modification N6-acetyllysine; alternate. An N6-succinyllysine; alternate modification is found at Lys251. A Mn(2+)-binding site is contributed by Asp260. Lys268 is a binding site for NADP(+). Asp283 contributes to the Mn(2+) binding site. Residues 318 to 323 (GTVTRH) and Asn336 contribute to the NADP(+) site. Lys353 bears the N6-acetyllysine; alternate mark. N6-succinyllysine; alternate is present on Lys353. An N6-acetyllysine mark is found at Lys369, Lys382, and Lys411.

It belongs to the isocitrate and isopropylmalate dehydrogenases family. In terms of assembly, homodimer. Mg(2+) serves as cofactor. The cofactor is Mn(2+). In terms of processing, acetylation at Lys-382 dramatically reduces catalytic activity. Deacetylated by SIRT3.

Its subcellular location is the mitochondrion. The catalysed reaction is D-threo-isocitrate + NADP(+) = 2-oxoglutarate + CO2 + NADPH. Plays a role in intermediary metabolism and energy production. It may tightly associate or interact with the pyruvate dehydrogenase complex. This is Isocitrate dehydrogenase [NADP], mitochondrial (IDH2) from Sus scrofa (Pig).